The chain runs to 148 residues: uncharacterized protein (148 aa).

Residues 38–99 are disordered; the sequence is QFRRHHHAEH…RRHLRKGHLK (62 aa). Positions 64–82 are enriched in basic and acidic residues; the sequence is FHHDGGRHGHATRIHENNR. A compositionally biased stretch (basic residues) spans 83–99; that stretch reads RPHKRNRRRHLRKGHLK.

This is an uncharacterized protein from Fowl adenovirus A serotype 1 (strain CELO / Phelps) (FAdV-1).